A 513-amino-acid polypeptide reads, in one-letter code: Probable cytosol aminopeptidase (513 aa).

2 residues coordinate Mn(2+): Lys-277 and Asp-282. Residue Lys-289 is part of the active site. Positions 300, 359, and 361 each coordinate Mn(2+). Arg-363 is a catalytic residue.

It belongs to the peptidase M17 family. Mn(2+) is required as a cofactor.

The protein localises to the cytoplasm. The catalysed reaction is Release of an N-terminal amino acid, Xaa-|-Yaa-, in which Xaa is preferably Leu, but may be other amino acids including Pro although not Arg or Lys, and Yaa may be Pro. Amino acid amides and methyl esters are also readily hydrolyzed, but rates on arylamides are exceedingly low.. It catalyses the reaction Release of an N-terminal amino acid, preferentially leucine, but not glutamic or aspartic acids.. In terms of biological role, presumably involved in the processing and regular turnover of intracellular proteins. Catalyzes the removal of unsubstituted N-terminal amino acids from various peptides. This chain is Probable cytosol aminopeptidase, found in Mycobacterium sp. (strain JLS).